The chain runs to 229 residues: Enolase-phosphatase E1 (229 aa).

A compositionally biased stretch (polar residues) spans 208 to 218; it reads DTQSTHRQVSS. The disordered stretch occupies residues 208–229; sequence DTQSTHRQVSSFDDIHPEQIPT. Basic and acidic residues predominate over residues 220–229; sequence DDIHPEQIPT.

It belongs to the HAD-like hydrolase superfamily. MasA/MtnC family. In terms of assembly, monomer. It depends on Mg(2+) as a cofactor.

It carries out the reaction 5-methylsulfanyl-2,3-dioxopentyl phosphate + H2O = 1,2-dihydroxy-5-(methylsulfanyl)pent-1-en-3-one + phosphate. It functions in the pathway amino-acid biosynthesis; L-methionine biosynthesis via salvage pathway; L-methionine from S-methyl-5-thio-alpha-D-ribose 1-phosphate: step 3/6. The protein operates within amino-acid biosynthesis; L-methionine biosynthesis via salvage pathway; L-methionine from S-methyl-5-thio-alpha-D-ribose 1-phosphate: step 4/6. Functionally, bifunctional enzyme that catalyzes the enolization of 2,3-diketo-5-methylthiopentyl-1-phosphate (DK-MTP-1-P) into the intermediate 2-hydroxy-3-keto-5-methylthiopentenyl-1-phosphate (HK-MTPenyl-1-P), which is then dephosphorylated to form the acireductone 1,2-dihydroxy-3-keto-5-methylthiopentene (DHK-MTPene). This chain is Enolase-phosphatase E1, found in Cronobacter sakazakii (Enterobacter sakazakii).